The sequence spans 442 residues: UDP-N-acetylmuramate--L-alanine ligase (442 aa).

ATP is bound at residue 110-116 (GAHGKTS).

Belongs to the MurCDEF family.

The protein resides in the cytoplasm. It carries out the reaction UDP-N-acetyl-alpha-D-muramate + L-alanine + ATP = UDP-N-acetyl-alpha-D-muramoyl-L-alanine + ADP + phosphate + H(+). The protein operates within cell wall biogenesis; peptidoglycan biosynthesis. Its function is as follows. Cell wall formation. In Streptococcus thermophilus (strain ATCC BAA-491 / LMD-9), this protein is UDP-N-acetylmuramate--L-alanine ligase.